A 532-amino-acid chain; its full sequence is Cytochrome P450 99A2 (532 aa).

The helical transmembrane segment at 30–50 (SAATLTLVSLLTLPILLALLT) threads the bilayer. Cys468 is a binding site for heme. Residues 473-493 (FGMVLLELIVARLLYYFDWSL) traverse the membrane as a helical segment.

This sequence belongs to the cytochrome P450 family. Requires heme as cofactor.

It is found in the membrane. Involved in momilactone phytoalexins biosynthesis. Participates in the biosynthetic steps between 9-beta-pimara-7,15-diene and 3-beta-hydroxy-9-beta-pimara-7,15-dien-19,6-beta-olide. This is Cytochrome P450 99A2 (CYP99A2) from Oryza sativa subsp. japonica (Rice).